The primary structure comprises 273 residues: Pantothenate synthetase (273 aa).

27–34 (MGALHEGH) provides a ligand contact to ATP. His34 (proton donor) is an active-site residue. Gln58 serves as a coordination point for (R)-pantoate. Residue Gln58 participates in beta-alanine binding. 144–147 (GKKD) contacts ATP. Residue Gln150 participates in (R)-pantoate binding. Residues Val173 and 181 to 184 (LSSR) each bind ATP.

It belongs to the pantothenate synthetase family. In terms of assembly, homodimer.

The protein localises to the cytoplasm. It catalyses the reaction (R)-pantoate + beta-alanine + ATP = (R)-pantothenate + AMP + diphosphate + H(+). It participates in cofactor biosynthesis; (R)-pantothenate biosynthesis; (R)-pantothenate from (R)-pantoate and beta-alanine: step 1/1. Its function is as follows. Catalyzes the condensation of pantoate with beta-alanine in an ATP-dependent reaction via a pantoyl-adenylate intermediate. In Sulfurimonas denitrificans (strain ATCC 33889 / DSM 1251) (Thiomicrospira denitrificans (strain ATCC 33889 / DSM 1251)), this protein is Pantothenate synthetase.